The primary structure comprises 223 residues: Deoxyribose-phosphate aldolase (223 aa).

The active-site Proton donor/acceptor is Asp-89. Lys-152 serves as the catalytic Schiff-base intermediate with acetaldehyde. Lys-181 serves as the catalytic Proton donor/acceptor.

It belongs to the DeoC/FbaB aldolase family. DeoC type 1 subfamily.

It is found in the cytoplasm. The enzyme catalyses 2-deoxy-D-ribose 5-phosphate = D-glyceraldehyde 3-phosphate + acetaldehyde. It functions in the pathway carbohydrate degradation; 2-deoxy-D-ribose 1-phosphate degradation; D-glyceraldehyde 3-phosphate and acetaldehyde from 2-deoxy-alpha-D-ribose 1-phosphate: step 2/2. Catalyzes a reversible aldol reaction between acetaldehyde and D-glyceraldehyde 3-phosphate to generate 2-deoxy-D-ribose 5-phosphate. The sequence is that of Deoxyribose-phosphate aldolase from Bacillus cereus (strain ATCC 14579 / DSM 31 / CCUG 7414 / JCM 2152 / NBRC 15305 / NCIMB 9373 / NCTC 2599 / NRRL B-3711).